Here is a 792-residue protein sequence, read N- to C-terminus: MDKTTTSDLVLDNDNIGSNAGSAQEPLTTNGKTSGVRNRYKQTVKRGRKGSQISPSKTYPLRSSHSNVRVLRSASKKKNETPIVPTNDNTAVQRVAKKRKRSKPLRPAPSRVLRSTSEKKNKAHNELLNDGAGVQPAEKKRKVGRPPKGGTPKDDYLMIRKRVRYVLNRMNYEQSLIQAYASEGWKGQSLEKIRPEKELERAKVEILRCKSRIREAFRNLDSLLSEGKLDESMFDSAGEISSEDIFCAACGSKDVTLKNDIILCDGICDRGFHQYCLNPPLLAEDIPQGDEGWLCPACDCKIDCIDVLNELQGVKLSIHDSWEKVFPEAASFLNGSKQIDASDLPSDDSADNDYDPTLAQGHKVDEEKSSGEDGGEGLDSDDSSSEDSESSEKEKSKTSQNGRTVDDLGLPSEDSEDGDFDPAGPDSDKEQNDESNSDQSDESDFTSDSDDFCAEIAKSCGQDEISGPSSSQIRTVDRTDGSGFDGEPNAENSNLAFMETELEQDMVLPISSKRQVERLDYKKLYNEAYGKASSDSSDDEEWYGNSTPEKGNLEDSETDSLAESPQGGKGFSRRAPVRYHNNEHTPQNVRPGGSVSDQQTEVLCSNSNGSTAKNRHFGPAINQKLKAHFKEDPYPSRATKENLAQELGLTFNQVTKWFSSTRHYARVAATKKENNIENHTAENNNNTNTVDSIQLRGSNDIVSVDRNDMVSEERTGQSNLNEGTPLRSDTSCGQSVAVTPMVHPENQGNDSSSNVRTPNAKSAEKLIPGLENSDEARRKAVQRELRKMKTGR.

The tract at residues 1 to 154 is disordered; that stretch reads MDKTTTSDLV…RPPKGGTPKD (154 aa). A compositionally biased stretch (polar residues) spans 15–36; sequence NIGSNAGSAQEPLTTNGKTSGV. A compositionally biased stretch (basic residues) spans 38 to 49; sequence NRYKQTVKRGRK. Residues 51-67 are compositionally biased toward polar residues; sequence SQISPSKTYPLRSSHSN. Positions 95–104 are enriched in basic residues; that stretch reads VAKKRKRSKP. Positions 116–127 are enriched in basic and acidic residues; the sequence is TSEKKNKAHNEL. The PHD-type zinc finger occupies 244–301; it reads DIFCAACGSKDVTLKNDIILCDGICDRGFHQYCLNPPLLAEDIPQGDEGWLCPACDCK. Disordered stretches follow at residues 338-495 and 529-599; these read QIDA…NSNL and YGKA…SDQQ. Positions 345–354 are enriched in acidic residues; sequence PSDDSADNDY. The span at 362 to 371 shows a compositional bias: basic and acidic residues; sequence HKVDEEKSSG. Acidic residues-rich tracts occupy residues 373-389 and 433-453; these read DGGE…EDSE and DESN…DDFC. A DNA-binding region (homeobox) is located at residues 610-669; that stretch reads STAKNRHFGPAINQKLKAHFKEDPYPSRATKENLAQELGLTFNQVTKWFSSTRHYARVAA. 2 disordered regions span residues 677–697 and 711–792; these read ENHT…QLRG and SEER…KTGR. Polar residues-rich tracts occupy residues 716–737 and 746–760; these read GQSN…QSVA and NQGN…TPNA. A compositionally biased stretch (basic and acidic residues) spans 774-792; sequence DEARRKAVQRELRKMKTGR.

Belongs to the PHD-associated homeobox family. In terms of tissue distribution, expressed in roots, leaves, stems, panicle and seeds.

The protein resides in the nucleus. In terms of biological role, transcriptional repressor involved in the regulation of gibberrelin (GA) signaling. Binds to the 5'-GATC-3' motif of HD16/EL1 promoter. Functions as a positive regulator of GA signaling by suppressing the expression of HD16/EL1, a negative regulator of GA signaling. This Oryza sativa subsp. japonica (Rice) protein is Homeobox protein HAZ1.